Consider the following 168-residue polypeptide: uncharacterized protein (168 aa).

In terms of domain architecture, N-acetyltransferase spans 7-168; it reads ERIDTLKTGD…TAKGWPDISM (162 aa).

This is an uncharacterized protein from Azospirillum brasilense.